The chain runs to 421 residues: Homoserine dehydrogenase (421 aa).

3 residues coordinate NAD(+): valine 15, alanine 34, and valine 44. Valine 15 serves as a coordination point for NADP(+). Valine 15 contacts NADPH. The NADP(+) site is built by arginine 46 and lysine 103. Residues arginine 46 and lysine 103 each contribute to the NADPH site. Residues glutamate 125, valine 128, glycine 130, and isoleucine 132 each coordinate Na(+). The NADP(+) site is built by glycine 183 and glutamate 186. L-homoserine is bound by residues glutamate 186 and aspartate 197. Catalysis depends on lysine 201, which acts as the Proton donor. Glycine 298 provides a ligand contact to NAD(+). Glycine 298 lines the NADP(+) pocket. Residue glycine 298 participates in NADPH binding. The ACT domain occupies 343–418; the sequence is YARLLVSDEK…SVLDTPKMIR (76 aa).

It belongs to the homoserine dehydrogenase family. It depends on a metal cation as a cofactor.

The enzyme catalyses L-homoserine + NADP(+) = L-aspartate 4-semialdehyde + NADPH + H(+). It carries out the reaction L-homoserine + NAD(+) = L-aspartate 4-semialdehyde + NADH + H(+). It functions in the pathway amino-acid biosynthesis; L-methionine biosynthesis via de novo pathway; L-homoserine from L-aspartate: step 3/3. The protein operates within amino-acid biosynthesis; L-threonine biosynthesis; L-threonine from L-aspartate: step 3/5. Its function is as follows. Catalyzes the conversion of L-aspartate-beta-semialdehyde (L-Asa) to L-homoserine (L-Hse), the third step in the biosynthesis of threonine and methionine from aspartate. The polypeptide is Homoserine dehydrogenase (hom) (Helicobacter pylori (strain ATCC 700392 / 26695) (Campylobacter pylori)).